The chain runs to 345 residues: Phosphoribosylformylglycinamidine cyclo-ligase (345 aa).

Belongs to the AIR synthase family.

Its subcellular location is the cytoplasm. It carries out the reaction 2-formamido-N(1)-(5-O-phospho-beta-D-ribosyl)acetamidine + ATP = 5-amino-1-(5-phospho-beta-D-ribosyl)imidazole + ADP + phosphate + H(+). It participates in purine metabolism; IMP biosynthesis via de novo pathway; 5-amino-1-(5-phospho-D-ribosyl)imidazole from N(2)-formyl-N(1)-(5-phospho-D-ribosyl)glycinamide: step 2/2. This Shouchella clausii (strain KSM-K16) (Alkalihalobacillus clausii) protein is Phosphoribosylformylglycinamidine cyclo-ligase.